A 223-amino-acid chain; its full sequence is Keratin-associated protein 5-4 (223 aa).

Tandem repeats lie at residues 21 to 24 (CCKP), 27 to 30 (CCVP), 79 to 82 (CCKP), 89 to 92 (CCKP), 107 to 110 (CCKP), 117 to 120 (CCKP), 135 to 138 (CCKP), 145 to 148 (CCKP), 155 to 158 (CCKP), 173 to 176 (CCKP), 183 to 186 (CCKP), 193 to 196 (CCKP), 203 to 206 (CCKP), and 213 to 216 (CCAP). The segment at 21 to 216 (CCKPVCCCVP…CCCQSSCCAP (196 aa)) is 14 X 4 AA repeats of C-C-X-P.

It belongs to the KRTAP type 5 family. In terms of assembly, interacts with hair keratins. As to expression, expressed during the active phases of the hair cycle in the medulla and the inner root sheath of the forming hair. Also expressed in the upper layers of the epidermis of skin.

In the hair cortex, hair keratin intermediate filaments are embedded in an interfilamentous matrix, consisting of hair keratin-associated protein (KRTAP), which are essential for the formation of a rigid and resistant hair shaft through their extensive disulfide bond cross-linking with abundant cysteine residues of hair keratins. The matrix proteins include the high-sulfur and high-glycine-tyrosine keratins. This is Keratin-associated protein 5-4 from Mus musculus (Mouse).